Consider the following 209-residue polypeptide: Somatotropin (209 aa).

A signal peptide spans 1-22; the sequence is MGQVFLLMPVLLVAGYLSLGAA. H38 lines the Zn(2+) pocket. Residues C71 and C182 are joined by a disulfide bond. Position 191 (E191) interacts with Zn(2+). C199 and C207 are disulfide-bonded.

This sequence belongs to the somatotropin/prolactin family.

It is found in the secreted. In terms of biological role, growth hormone plays an important role in growth control and is involved in the regulation of several anabolic processes. Implicated as an osmoregulatory substance important for seawater adaptation. The polypeptide is Somatotropin (gh) (Esox lucius (Northern pike)).